Here is a 285-residue protein sequence, read N- to C-terminus: Golgi phosphoprotein 3-like (285 aa).

A disordered region spans residues 1–42; that stretch reads MTTLTHRARRTEISKNSEKKMESEEDSNWEKSPDNEDSGDSK. Positions 10-42 are enriched in basic and acidic residues; that stretch reads RTEISKNSEKKMESEEDSNWEKSPDNEDSGDSK. Residues tryptophan 67 and arginine 76 each contribute to the a 1,2-diacyl-sn-glycero-3-phospho-(1D-myo-inositol 4-phosphate) site. Serine 112 is subject to Phosphoserine. 2 residues coordinate a 1,2-diacyl-sn-glycero-3-phospho-(1D-myo-inositol 4-phosphate): arginine 157 and arginine 160. Positions 176 to 187 are beta-hairpin required for oligomerization; the sequence is EKQNFLLFDMTT.

This sequence belongs to the GOLPH3/VPS74 family. Homooligomer. Does not interact MYO18; differs from GOLPH3 by its inability to interact with MYO18. May interact with ARF1.

Its subcellular location is the golgi apparatus. It is found in the golgi stack membrane. The protein resides in the trans-Golgi network membrane. In terms of biological role, phosphatidylinositol-4-phosphate-binding protein that may antagonize the action of GOLPH3 which is required for the process of vesicle budding at the Golgi and anterograde transport to the plasma membrane. The polypeptide is Golgi phosphoprotein 3-like (GOLPH3L) (Homo sapiens (Human)).